A 322-amino-acid chain; its full sequence is tRNA uridine(34) hydroxylase (322 aa).

The 95-residue stretch at 125-219 folds into the Rhodanese domain; the sequence is QQEDTIVVDA…YGKDPEVQGE (95 aa). Cys179 (cysteine persulfide intermediate) is an active-site residue.

Belongs to the TrhO family.

It catalyses the reaction uridine(34) in tRNA + AH2 + O2 = 5-hydroxyuridine(34) in tRNA + A + H2O. Catalyzes oxygen-dependent 5-hydroxyuridine (ho5U) modification at position 34 in tRNAs. This Bacillus licheniformis (strain ATCC 14580 / DSM 13 / JCM 2505 / CCUG 7422 / NBRC 12200 / NCIMB 9375 / NCTC 10341 / NRRL NRS-1264 / Gibson 46) protein is tRNA uridine(34) hydroxylase.